Consider the following 394-residue polypeptide: S-adenosylmethionine synthase 1 (394 aa).

Residue E11 participates in Mg(2+) binding. ATP is bound at residue H17. K(+) is bound at residue E45. Positions 58 and 101 each coordinate L-methionine. ATP is bound by residues 169–171 (DGK), 237–240 (SGRF), D248, 254–255 (RK), A271, K275, and K279. Residue D248 coordinates L-methionine. K279 contacts L-methionine.

Belongs to the AdoMet synthase family. In terms of assembly, homotetramer. The cofactor is Mn(2+). Mg(2+) is required as a cofactor. It depends on Co(2+) as a cofactor. Requires K(+) as cofactor.

It localises to the cytoplasm. The enzyme catalyses L-methionine + ATP + H2O = S-adenosyl-L-methionine + phosphate + diphosphate. The protein operates within amino-acid biosynthesis; S-adenosyl-L-methionine biosynthesis; S-adenosyl-L-methionine from L-methionine: step 1/1. In terms of biological role, catalyzes the formation of S-adenosylmethionine from methionine and ATP. The reaction comprises two steps that are both catalyzed by the same enzyme: formation of S-adenosylmethionine (AdoMet) and triphosphate, and subsequent hydrolysis of the triphosphate. The sequence is that of S-adenosylmethionine synthase 1 (SAM1) from Hordeum vulgare (Barley).